A 728-amino-acid polypeptide reads, in one-letter code: FAD-dependent monooxygenase avaB (728 aa).

A helical transmembrane segment spans residues 17-37 (VIDLLLTFFFYSGLYGLIAAK). Positions 50–64 (NQQCENTDDVPQSFQ) are enriched in polar residues. The tract at residues 50 to 72 (NQQCENTDDVPQSFQRPRDTRST) is disordered. FAD is bound at residue Val168. 490–491 (DL) is a binding site for NADP(+).

It belongs to the FAD-binding monooxygenase family. FAD serves as cofactor.

The protein localises to the membrane. It participates in secondary metabolite metabolism. Functionally, multifunctional FAD-dependent monooxygenase; part of the cluster that mediates the biosynthesis of a highly modified cyclo-arginine-tryptophan dipeptide (cRW). Within the pathway, avaB uses the avaA cyclo-arginine-tryptophan dipeptide (cRW) as substrate to generate the cyclo-Arg-formylkynurenine diketopiperazine (DKP). AvaB also catalyzes an additional N-oxidation of the avaC product which is followed by cyclization and dehydration. The first step of the pathway is perfornmed by the arginine-containing cyclodipeptide synthase (RCPDS) avaA that acts as the scaffold-generating enzyme and is responsible for formation of the cyclo-Arg-Trp (cRW) diketopiperazine. AvaB then acts as a multifunctional flavoenzyme that is responsible for generating the cyclo-Arg-formylkynurenine DKP, which can be deformylated by avaC. AvaB then further catalyzes an additional N-oxidation followed by cyclization and dehydration. The next step is an N-acetylation of the guanidine group catalyzed by the arginine N-acetyltransferase avaD. The roles of the additional enzymes identified within the ava cluster still have to be determined. This is FAD-dependent monooxygenase avaB from Aspergillus versicolor.